The chain runs to 409 residues: Peptidase T (409 aa).

Residue His80 participates in Zn(2+) binding. Asp82 is an active-site residue. Asp143 contributes to the Zn(2+) binding site. The Proton acceptor role is filled by Glu177. Glu178, Asp200, and His382 together coordinate Zn(2+).

Belongs to the peptidase M20B family. Zn(2+) serves as cofactor.

The protein localises to the cytoplasm. The enzyme catalyses Release of the N-terminal residue from a tripeptide.. Functionally, cleaves the N-terminal amino acid of tripeptides. The sequence is that of Peptidase T from Enterococcus faecalis (strain ATCC 700802 / V583).